The sequence spans 636 residues: Protein BCAP (636 aa).

Coiled coils occupy residues 36–97, 141–220, 249–325, 377–484, and 519–631; these read LSCL…EQKE, ESEN…WNLQ, YKQR…HGKN, ISSE…ECQE, and LEEE…KMNS.

The protein belongs to the ODF2 family. In terms of tissue distribution, mainly expressed in trachea and testis. Not detected in bone marrow, bladder, leukocytes. Only weakly detected in tongue, stomach, brain and ovaries.

Its subcellular location is the cytoplasm. The protein resides in the cytoskeleton. It is found in the microtubule organizing center. It localises to the centrosome. The protein localises to the centriole. Its subcellular location is the centriolar satellite. The protein resides in the cilium basal body. In terms of biological role, acts as a suppressor of ciliogenesis, specifically, the initiation of ciliogenesis. This Homo sapiens (Human) protein is Protein BCAP.